The chain runs to 375 residues: Protein abhd-3.2 (375 aa).

An AB hydrolase-1 domain is found at Pro108 to Gly203. Active-site charge relay system residues include Ser189, Asp315, and His344.

It belongs to the AB hydrolase superfamily. AB hydrolase 4 family.

The polypeptide is Protein abhd-3.2 (Caenorhabditis elegans).